Consider the following 382-residue polypeptide: Small ribosomal subunit protein bS1 homolog (382 aa).

4 S1 motif domains span residues 16–84 (GDVV…LSKR), 102–167 (KEVF…LSHR), 188–256 (GSVL…LSIK), and 273–342 (GDVL…LSMR). Serine 243 is subject to Phosphoserine.

Belongs to the bacterial ribosomal protein bS1 family.

Plays a role in sporulation. Cannot be expressed in wild-type E.coli, does not complement an E.coli rpsA deletion. The polypeptide is Small ribosomal subunit protein bS1 homolog (Bacillus subtilis (strain 168)).